A 208-amino-acid polypeptide reads, in one-letter code: Probable thymidylate kinase (208 aa).

9-16 (GIDGAGKS) is an ATP binding site.

The protein belongs to the thymidylate kinase family.

It catalyses the reaction dTMP + ATP = dTDP + ADP. The polypeptide is Probable thymidylate kinase (Thermococcus gammatolerans (strain DSM 15229 / JCM 11827 / EJ3)).